A 448-amino-acid polypeptide reads, in one-letter code: Phosphoglucosamine mutase (448 aa).

Catalysis depends on S104, which acts as the Phosphoserine intermediate. Mg(2+) contacts are provided by S104, D245, D247, and D249. Phosphoserine is present on S104.

Belongs to the phosphohexose mutase family. The cofactor is Mg(2+). Post-translationally, activated by phosphorylation.

It catalyses the reaction alpha-D-glucosamine 1-phosphate = D-glucosamine 6-phosphate. Its function is as follows. Catalyzes the conversion of glucosamine-6-phosphate to glucosamine-1-phosphate. The polypeptide is Phosphoglucosamine mutase (Caulobacter vibrioides (strain ATCC 19089 / CIP 103742 / CB 15) (Caulobacter crescentus)).